The following is a 255-amino-acid chain: Type III pantothenate kinase (255 aa).

D7 to K14 lines the ATP pocket. Residues Y96 and G103 to R106 each bind substrate. Catalysis depends on D105, which acts as the Proton acceptor. Residue T133 participates in ATP binding. Residue T183 coordinates substrate.

Belongs to the type III pantothenate kinase family. As to quaternary structure, homodimer. NH4(+) is required as a cofactor. Requires K(+) as cofactor.

It is found in the cytoplasm. The enzyme catalyses (R)-pantothenate + ATP = (R)-4'-phosphopantothenate + ADP + H(+). Its pathway is cofactor biosynthesis; coenzyme A biosynthesis; CoA from (R)-pantothenate: step 1/5. In terms of biological role, catalyzes the phosphorylation of pantothenate (Pan), the first step in CoA biosynthesis. This Albidiferax ferrireducens (strain ATCC BAA-621 / DSM 15236 / T118) (Rhodoferax ferrireducens) protein is Type III pantothenate kinase.